Reading from the N-terminus, the 804-residue chain is Leucine--tRNA ligase (804 aa).

Residues 40–51 (PYPSGAGLHVGH) carry the 'HIGH' region motif. The 'KMSKS' region motif lies at 576–580 (KMSKS). ATP is bound at residue K579.

It belongs to the class-I aminoacyl-tRNA synthetase family.

Its subcellular location is the cytoplasm. The enzyme catalyses tRNA(Leu) + L-leucine + ATP = L-leucyl-tRNA(Leu) + AMP + diphosphate. The protein is Leucine--tRNA ligase of Staphylococcus aureus (strain Mu3 / ATCC 700698).